A 426-amino-acid polypeptide reads, in one-letter code: MSHQNQLIPQAYISNFHNRLTNEDDGIPIFTMAQQTRQHKRAKVVNYAEYDNDLFDEFNMNGSNFNNADTHYKDNAVSHENTPALTNGVTMDGSEYNVLENMNGADSIISNNKYDAGSNMVVESLSGLNSNNNASNGPSNKAQAQDIGNAVLPDLQDQHHNPFNILRYPKIRDTFINGKVVSPYRLNTDQETKANANSGEAIMIPITLDIEHMGHTIKDQFLWNYNDDSISPEEFASIYCKDLDMTSATLQTQIANIIKEQLKDLENIAATEIMSDLHVIINLTCNLQDRFFEDNFQWNLNDKSLTPERFATSIVQDLGLTREFIPLISQSLHETILKIKKDWVDGHLIQDHVPNDAAFGYLSGIRLDIDELGSNWCPRVEILTKEEIQKREIEKERNLRRLKRETDRLSRRGRRRLDDLETTMRM.

At Ser78 the chain carries Phosphoserine. The interaction with STH1 stretch occupies residues 201–242; the sequence is AIMIPITLDIEHMGHTIKDQFLWNYNDDSISPEEFASIYCKD.

The protein belongs to the SNF5 family. As to quaternary structure, interacts directly with STH1. Component of the two forms of the RSC complex composed of at least either RSC1 or RSC2, and ARP7, ARP9, LDB7, NPL6, RSC3, RSC30, RSC4, RSC58, RSC6, RSC8, RSC9, SFH1, STH1, HTL1 and probably RTT102. The complexes interact with histone and histone variant components of centromeric chromatin. In terms of processing, phosphorylated in the G1 phase.

The protein localises to the nucleus. In terms of biological role, component of the chromatin structure-remodeling complex (RSC), which is involved in transcription regulation and nucleosome positioning. RSC is responsible for the transfer of a histone octamer from a nucleosome core particle to naked DNA. The reaction requires ATP and involves an activated RSC-nucleosome intermediate. Remodeling reaction also involves DNA translocation, DNA twist and conformational change. As a reconfigurer of centromeric and flanking nucleosomes, RSC complex is required both for proper kinetochore function in chromosome segregation and, via a PKC1-dependent signaling pathway, for organization of the cellular cytoskeleton. This subunit is essential for mitotic growth and required for cell cycle progression. The chain is Chromatin structure-remodeling complex subunit SFH1 (SFH1) from Saccharomyces cerevisiae (strain ATCC 204508 / S288c) (Baker's yeast).